The following is a 59-amino-acid chain: Large ribosomal subunit protein bL32 (59 aa).

Residues 35–59 (EAHLRHHISPNGYYRGRKVVKTKND) form a disordered region. A compositionally biased stretch (basic residues) spans 49–59 (RGRKVVKTKND).

This sequence belongs to the bacterial ribosomal protein bL32 family.

This is Large ribosomal subunit protein bL32 from Polynucleobacter asymbioticus (strain DSM 18221 / CIP 109841 / QLW-P1DMWA-1) (Polynucleobacter necessarius subsp. asymbioticus).